Consider the following 233-residue polypeptide: 7-cyano-7-deazaguanine synthase (233 aa).

Residue 13-23 coordinates ATP; the sequence is LSGGLDSATAM. Cys-197, Cys-207, Cys-210, and Cys-213 together coordinate Zn(2+).

The protein belongs to the QueC family. The cofactor is Zn(2+).

It carries out the reaction 7-carboxy-7-deazaguanine + NH4(+) + ATP = 7-cyano-7-deazaguanine + ADP + phosphate + H2O + H(+). The protein operates within purine metabolism; 7-cyano-7-deazaguanine biosynthesis. Functionally, catalyzes the ATP-dependent conversion of 7-carboxy-7-deazaguanine (CDG) to 7-cyano-7-deazaguanine (preQ(0)). This is 7-cyano-7-deazaguanine synthase from Desulfatibacillum aliphaticivorans.